The sequence spans 64 residues: Large ribosomal subunit protein bL33m (64 aa).

The protein belongs to the bacterial ribosomal protein bL33 family. As to quaternary structure, component of the mitochondrial ribosome large subunit (39S) which comprises a 16S rRNA and about 50 distinct proteins.

It is found in the mitochondrion. This is Large ribosomal subunit protein bL33m (mRpL33) from Drosophila melanogaster (Fruit fly).